The chain runs to 486 residues: Aromatic-L-amino-acid decarboxylase (486 aa).

N-acetylmethionine is present on Met1. Tandem repeats lie at residues Gln58–Glu115 and Met118–Ala178. The tract at residues Gln58 to Ala178 is 2 X approximate tandem repeats. Residue Thr82 participates in substrate binding. Ala148 and Ser149 together coordinate pyridoxal 5'-phosphate. His192 is a substrate binding site. Positions 246 and 300 each coordinate pyridoxal 5'-phosphate. Residue Lys303 is modified to N6-(pyridoxal phosphate)lysine.

Belongs to the group II decarboxylase family. In terms of assembly, homodimer. It depends on pyridoxal 5'-phosphate as a cofactor.

The catalysed reaction is L-dopa + H(+) = dopamine + CO2. It carries out the reaction 5-hydroxy-L-tryptophan + H(+) = serotonin + CO2. It participates in catecholamine biosynthesis; dopamine biosynthesis; dopamine from L-tyrosine: step 2/2. Functionally, catalyzes the decarboxylation of L-3,4-dihydroxyphenylalanine (DOPA) to dopamine and L-5-hydroxytryptophan to serotonin. This chain is Aromatic-L-amino-acid decarboxylase (DDC), found in Sus scrofa (Pig).